The chain runs to 98 residues: NADH-ubiquinone oxidoreductase chain 4L (98 aa).

Transmembrane regions (helical) follow at residues 1-21 (MTPL…GVLI), 28-48 (STLL…SLLI), and 59-79 (APLI…ALLV).

Belongs to the complex I subunit 4L family. As to quaternary structure, core subunit of respiratory chain NADH dehydrogenase (Complex I) which is composed of 45 different subunits.

It localises to the mitochondrion inner membrane. The catalysed reaction is a ubiquinone + NADH + 5 H(+)(in) = a ubiquinol + NAD(+) + 4 H(+)(out). Core subunit of the mitochondrial membrane respiratory chain NADH dehydrogenase (Complex I) which catalyzes electron transfer from NADH through the respiratory chain, using ubiquinone as an electron acceptor. Part of the enzyme membrane arm which is embedded in the lipid bilayer and involved in proton translocation. This chain is NADH-ubiquinone oxidoreductase chain 4L (MT-ND4L), found in Tarsipes rostratus (Honey possum).